Here is a 223-residue protein sequence, read N- to C-terminus: MQLEKLQKKLGHQFTNLDYLKQALTHRSAAAFNNERLEFLGDSILNFAIGKALYEKFPKSNEGELSRMRATLVKEQTLAVVARQVELGDYLKLGAGELKSGGFRRESILSDCVEALIAAIYLDAGIDVALARVYQWYQELLEQIKPGEAQKDPKTRLQEFLQGHRLKLPEYEVIEIKGDAHNQSFRVSCKVETLTDVVFGQGTSRRKAEQHAAQQAIEKLKIK.

The RNase III domain maps to 3-125; the sequence is LEKLQKKLGH…LIAAIYLDAG (123 aa). Position 38 (Glu38) interacts with Mg(2+). Asp42 is an active-site residue. Mg(2+)-binding residues include Asp111 and Glu114. Glu114 is an active-site residue. Residues 152 to 222 form the DRBM domain; that stretch reads DPKTRLQEFL…AQQAIEKLKI (71 aa).

This sequence belongs to the ribonuclease III family. As to quaternary structure, homodimer. It depends on Mg(2+) as a cofactor.

It localises to the cytoplasm. It carries out the reaction Endonucleolytic cleavage to 5'-phosphomonoester.. Its function is as follows. Digests double-stranded RNA. Involved in the processing of primary rRNA transcript to yield the immediate precursors to the large and small rRNAs (23S and 16S). Processes some mRNAs, and tRNAs when they are encoded in the rRNA operon. Processes pre-crRNA and tracrRNA of type II CRISPR loci if present in the organism. The sequence is that of Ribonuclease 3 from Histophilus somni (strain 2336) (Haemophilus somnus).